A 156-amino-acid polypeptide reads, in one-letter code: Small ribosomal subunit protein uS7 (156 aa).

The protein belongs to the universal ribosomal protein uS7 family. Part of the 30S ribosomal subunit. Contacts proteins S9 and S11.

Functionally, one of the primary rRNA binding proteins, it binds directly to 16S rRNA where it nucleates assembly of the head domain of the 30S subunit. Is located at the subunit interface close to the decoding center, probably blocks exit of the E-site tRNA. The sequence is that of Small ribosomal subunit protein uS7 from Brachyspira hyodysenteriae (strain ATCC 49526 / WA1).